Consider the following 597-residue polypeptide: Aspartate--tRNA(Asp/Asn) ligase (597 aa).

E182 is a binding site for L-aspartate. Positions 206 to 209 (QLFK) are aspartate. An L-aspartate-binding site is contributed by R228. ATP-binding positions include 228–230 (RDE) and Q237. L-aspartate is bound at residue H455. E489 serves as a coordination point for ATP. R496 contributes to the L-aspartate binding site. Residue 541–544 (GFDR) participates in ATP binding.

This sequence belongs to the class-II aminoacyl-tRNA synthetase family. Type 1 subfamily. Homodimer.

It localises to the cytoplasm. It carries out the reaction tRNA(Asx) + L-aspartate + ATP = L-aspartyl-tRNA(Asx) + AMP + diphosphate. Its function is as follows. Aspartyl-tRNA synthetase with relaxed tRNA specificity since it is able to aspartylate not only its cognate tRNA(Asp) but also tRNA(Asn). Reaction proceeds in two steps: L-aspartate is first activated by ATP to form Asp-AMP and then transferred to the acceptor end of tRNA(Asp/Asn). The chain is Aspartate--tRNA(Asp/Asn) ligase from Desulfosudis oleivorans (strain DSM 6200 / JCM 39069 / Hxd3) (Desulfococcus oleovorans).